The primary structure comprises 275 residues: NH(3)-dependent NAD(+) synthetase (275 aa).

An ATP-binding site is contributed by 46–53; it reads GISGGQDS. D52 lines the Mg(2+) pocket. R140 lines the deamido-NAD(+) pocket. ATP is bound at residue T160. E165 is a binding site for Mg(2+). Positions 173 and 180 each coordinate deamido-NAD(+). 2 residues coordinate ATP: K189 and T211. A deamido-NAD(+)-binding site is contributed by 260–261; the sequence is HK.

The protein belongs to the NAD synthetase family. In terms of assembly, homodimer.

The catalysed reaction is deamido-NAD(+) + NH4(+) + ATP = AMP + diphosphate + NAD(+) + H(+). It participates in cofactor biosynthesis; NAD(+) biosynthesis; NAD(+) from deamido-NAD(+) (ammonia route): step 1/1. Catalyzes the ATP-dependent amidation of deamido-NAD to form NAD. Uses ammonia as a nitrogen source. This chain is NH(3)-dependent NAD(+) synthetase, found in Shigella flexneri serotype 5b (strain 8401).